Reading from the N-terminus, the 257-residue chain is Short chain dehydrogenase prhI (257 aa).

Residues 7–29 traverse the membrane as a helical segment; the sequence is HVVIITGSSSGIGLAASTLALAS. Position 11 (Ile11) interacts with NADP(+). Asn50 carries an N-linked (GlcNAc...) asparagine glycan. Asp57 contacts NADP(+). N-linked (GlcNAc...) asparagine glycans are attached at residues Asn92 and Asn110. NADP(+)-binding residues include Arg119, Tyr151, Lys155, and Val184. Tyr151 acts as the Proton acceptor in catalysis. Lys155 serves as the catalytic Lowers pKa of active site Tyr.

It belongs to the short-chain dehydrogenases/reductases (SDR) family.

It localises to the membrane. It catalyses the reaction protoaustinoid A + A = protoaustinoid B + AH2. The protein operates within secondary metabolite biosynthesis; terpenoid biosynthesis. Functionally, short chain dehydrogenase; part of the gene cluster that mediates the biosynthesis of paraherquonin, a meroterpenoid with a unique, highly congested hexacyclic molecular architecture. The first step of the pathway is the synthesis of 3,5-dimethylorsellinic acid (DMOA) by the polyketide synthase prhL. Synthesis of DMOA is followed by farnesylation by the prenyltransferase prhE, methylesterification by the methyl-transferase prhM, epoxidation of the prenyl chain by the flavin-dependent monooxygenase prhF, and cyclization of the farnesyl moiety by the terpene cyclase prhH, to yield the tetracyclic intermediate, protoaustinoid A. The short chain dehydrogenase prhI then oxidizes the C-3 alcohol group of the terpene cyclase product to transform protoaustinoid A into protoaustinoid B. The FAD-binding monooxygenase prhJ catalyzes the oxidation of protoaustinoid B into preaustinoid A which is further oxidized into preaustinoid A1 by FAD-binding monooxygenase phrK. Finally, prhA leads to berkeleydione via the berkeleyone B intermediate. PrhA is a multifunctional dioxygenase that first desaturates at C5-C6 to form berkeleyone B, followed by rearrangement of the A/B-ring to form the cycloheptadiene moiety in berkeleydione. Berkeleydione serves as the key intermediate for the biosynthesis of paraherquonin as well as many other meroterpenoids. The cytochrome P450 monooxygenases prhB, prhD, and prhN, as well as the isomerase prhC, are probably involved in the late stage of paraherquonin biosynthesis, after the production of berkeleydione. Especially prhC might be a multifunctional enzyme that catalyzes the D-ring expansion via intramolecular methoxy rearrangement, as well as the hydrolysis of the expanded D-ring. The polypeptide is Short chain dehydrogenase prhI (Penicillium brasilianum).